A 194-amino-acid chain; its full sequence is Large ribosomal subunit protein uL6z/uL6y (194 aa).

A Phosphothreonine modification is found at Thr75.

The protein belongs to the universal ribosomal protein uL6 family.

The protein is Large ribosomal subunit protein uL6z/uL6y (RPL9B) of Arabidopsis thaliana (Mouse-ear cress).